We begin with the raw amino-acid sequence, 475 residues long: UDP-N-acetylmuramoylalanine--D-glutamate ligase (475 aa).

130–136 (GTNGKTT) lines the ATP pocket.

This sequence belongs to the MurCDEF family.

It localises to the cytoplasm. The enzyme catalyses UDP-N-acetyl-alpha-D-muramoyl-L-alanine + D-glutamate + ATP = UDP-N-acetyl-alpha-D-muramoyl-L-alanyl-D-glutamate + ADP + phosphate + H(+). It participates in cell wall biogenesis; peptidoglycan biosynthesis. Its function is as follows. Cell wall formation. Catalyzes the addition of glutamate to the nucleotide precursor UDP-N-acetylmuramoyl-L-alanine (UMA). This Corynebacterium efficiens (strain DSM 44549 / YS-314 / AJ 12310 / JCM 11189 / NBRC 100395) protein is UDP-N-acetylmuramoylalanine--D-glutamate ligase.